The sequence spans 132 residues: D-ribose pyranase (132 aa).

Residue His20 is the Proton donor of the active site. Residues Asp28, His99, and 121 to 123 (YSN) contribute to the substrate site.

This sequence belongs to the RbsD / FucU family. RbsD subfamily. As to quaternary structure, homodecamer.

Its subcellular location is the cytoplasm. It carries out the reaction beta-D-ribopyranose = beta-D-ribofuranose. The protein operates within carbohydrate metabolism; D-ribose degradation; D-ribose 5-phosphate from beta-D-ribopyranose: step 1/2. Catalyzes the interconversion of beta-pyran and beta-furan forms of D-ribose. In Pseudomonas putida (strain ATCC 47054 / DSM 6125 / CFBP 8728 / NCIMB 11950 / KT2440), this protein is D-ribose pyranase.